An 830-amino-acid polypeptide reads, in one-letter code: Probable mixed-linked glucan synthase 7 (830 aa).

2 consecutive transmembrane segments (helical) span residues L61–A81 and A98–L118. The active site involves D186. A coiled-coil region spans residues E251–R279. 2 residues coordinate substrate: D367 and D369. D529 is an active-site residue. Helical transmembrane passes span L613 to W633, T638 to L658, F676 to V696, A735 to G755, L776 to M796, and P805 to L825.

The protein belongs to the glycosyltransferase 2 family. Plant cellulose synthase-like F subfamily. As to expression, expressed in mature pollen.

Its subcellular location is the golgi apparatus membrane. May catalyze both beta-1,3 and beta-1,4 glycosidic linkage on beta-D-glucan. Essential for (1,3;1,4)-beta-D-glucans synthesis in grasses and cereals (Poaceae). The mixed-linked glucans (which are not present in walls of dicotyledons or most other monocotyledonous plants) are particularly important constituents of the walls of the starchy endosperm and aleurone cells of cereal grains such as oats, wheat, rice and barley. They can account for up to 70% by weight of the wall. The sequence is that of Probable mixed-linked glucan synthase 7 (CSLF7) from Oryza sativa subsp. japonica (Rice).